The chain runs to 663 residues: Innate immunity activator protein (663 aa).

The interval 1 to 73 (MLQMPKLNEI…PGPGWDQCSP (73 aa)) is disordered. Residues 23–47 (EGRWAGPTGPEAARPARGARGQARG) are compositionally biased toward low complexity. Basic and acidic residues predominate over residues 50-59 (ARWDSWEHSR). Residues 117–147 (NAVRKQQRALEARLEACLEELRRLCLREAEL) adopt a coiled-coil conformation. The short motif at 164–170 (PKVRRRI) is the Nuclear localization signal (NLS) 1 element. Disordered regions lie at residues 219–363 (RQRK…SSLW) and 375–405 (IRNVPGQRQGRTSAPATPEMQGRRGQSQSLR). Residues 225 to 246 (ALQEEKKLRDLQRCLGDRRRNS) are compositionally biased toward basic and acidic residues. Residues 259–272 (ELSASDDSSLSDGL) are compositionally biased toward low complexity. Over residues 282–298 (PKPPPESPAPPSRPLPP) the composition is skewed to pro residues. The span at 327–340 (TSLDHPYEKPRKSS) shows a compositional bias: basic and acidic residues. The Nuclear localization signal (NLS) 2 signature appears at 332-338 (PYEKPRK). Over residues 349 to 361 (PATTPQDQPNPSS) the composition is skewed to polar residues. A Nuclear localization signal (NLS) 3 motif is present at residues 422 to 428 (PRRRPTH). Positions 448 to 483 (PACHSCSEDSGSDVSSISHPTSPGSSSPDISFLRPL) are disordered. The span at 455–475 (EDSGSDVSSISHPTSPGSSSP) shows a compositional bias: low complexity.

As to quaternary structure, interacts with IRAK1, NOD2 and RIPK2; the interaction takes place upon PRR stimulation. Interacts with YWHAQ/14-3-3T; the interaction increases upon PRR stimulation and is required for cellular signaling pathway activation and cytokine secretion. Interacts (via N-terminal domain) with CYTH1 and CYTH2 (via their N-terminal domains). Interacts with FBXW11 and BTRC; associates with SCF E3 ubiquitin-protein ligase complexes.

Its subcellular location is the nucleus. It localises to the cytoplasm. Functionally, expressed in peripheral macrophages and intestinal myeloid-derived cells, is required for optimal PRR (pattern recognition receptor)-induced signaling, cytokine secretion, and bacterial clearance. Upon stimulation of a broad range of PRRs (pattern recognition receptor) such as NOD2 or TLR2, TLR3, TLR4, TLR5, TLR7 and TLR9, associates with YWHAQ/14-3-3T, which in turn leads to the recruitment and activation of MAP kinases and NF-kappa-B signaling complexes that amplifies PRR-induced downstream signals and cytokine secretion. In the intestine, regulates adherens junction stability by regulating the degradation of CYTH1 and CYTH2, probably acting as substrate cofactor for SCF E3 ubiquitin-protein ligase complexes. Stabilizes adherens junctions by limiting CYTH1-dependent ARF6 activation. The protein is Innate immunity activator protein of Mus musculus (Mouse).